A 228-amino-acid polypeptide reads, in one-letter code: Trichome differentiation protein GL1 (228 aa).

2 consecutive HTH myb-type domains span residues 11–63 and 64–118; these read NQEY…MNYL and SPNV…SKKL. DNA-binding regions (H-T-H motif) lie at residues 39 to 63 and 91 to 114; these read WNRI…MNYL and WSLI…NTHL.

In terms of assembly, homodimer and heterodimer with MYB82. Interacts directly with GL3 and BHLH2. Part of a complex made of GL1, GL3 or BHLH2, and TTG1. Also interacts with BHLH2/EGL3/MYC146 and BHLH12/MYC1. Interacts with MYB82. As to expression, expressed in leaves, stems and flowers. Expressed in trichome cells and in leaf primordia.

The protein resides in the nucleus. In terms of biological role, transcription activator, when associated with BHLH2/EGL3/MYC146 or BHLH12/MYC1. Involved in epidermal cell fate specification in leaves. Together with TTG1 and GL3, promotes trichome formation and endoreplication. Regulates the production of a signal that induces hair (trichome) precursor cells on leaf primordia to differentiate. Binds to the WER-binding sites (WBS) promoter regions and activates the transcription of target genes. The sequence is that of Trichome differentiation protein GL1 from Arabidopsis thaliana (Mouse-ear cress).